A 702-amino-acid chain; its full sequence is Elongation factor G 2 (702 aa).

Residues Glu-8–Ser-291 enclose the tr-type G domain. Residues Ala-17–Thr-24, Asp-89–His-93, and Asn-143–Asp-146 each bind GTP. A disordered region spans residues Ile-293 to Asp-314.

The protein belongs to the TRAFAC class translation factor GTPase superfamily. Classic translation factor GTPase family. EF-G/EF-2 subfamily.

It localises to the cytoplasm. Its function is as follows. Catalyzes the GTP-dependent ribosomal translocation step during translation elongation. During this step, the ribosome changes from the pre-translocational (PRE) to the post-translocational (POST) state as the newly formed A-site-bound peptidyl-tRNA and P-site-bound deacylated tRNA move to the P and E sites, respectively. Catalyzes the coordinated movement of the two tRNA molecules, the mRNA and conformational changes in the ribosome. This Pseudomonas aeruginosa (strain ATCC 15692 / DSM 22644 / CIP 104116 / JCM 14847 / LMG 12228 / 1C / PRS 101 / PAO1) protein is Elongation factor G 2 (fusB).